Consider the following 66-residue polypeptide: Conotoxin Cl14.1b (66 aa).

The signal sequence occupies residues 1–19 (MNVTVMFLVLLLTMPLTDG). Residues 20 to 47 (FNIRAINGGELFGLVQRDAGNALDHGFY) constitute a propeptide that is removed on maturation.

It belongs to the conotoxin L superfamily. Post-translationally, contains 2 disulfide bonds. As to expression, expressed by the venom duct.

It is found in the secreted. The protein is Conotoxin Cl14.1b of Californiconus californicus (California cone).